Reading from the N-terminus, the 956-residue chain is GAS2-like protein 2B (956 aa).

The 128-residue stretch at 23–150 folds into the Calponin-homology (CH) domain; it reads YAMKEDLAEW…CLLELARRAS (128 aa). The 73-residue stretch at 191 to 263 folds into the GAR domain; it reads CDFKNLDQMV…HYLDKHDPCH (73 aa). Polar residues-rich tracts occupy residues 332-353 and 381-390; these read SSSY…QTPP and DPQQLGNPQS. 4 disordered regions span residues 332–361, 378–406, 853–885, and 914–956; these read SSSY…SMSI, DTQD…ASQL, RPKI…SRNN, and VNSE…ESWV. Residues 859-868 show a composition bias toward basic and acidic residues; that stretch reads RRDNRPEKKP.

Belongs to the GAS2 family.

Its subcellular location is the cytoplasm. It is found in the cytoskeleton. The protein localises to the cilium basal body. Its function is as follows. Together with gas2l2.L, regulates ciliary orientation and performance. In Xenopus laevis (African clawed frog), this protein is GAS2-like protein 2B.